Reading from the N-terminus, the 174-residue chain is MSINWVTYKEGSESDILLLENECMFDCFDGVAISILCKPPSLKSWTCTKGLLCLTNQRLVYIAKDTDCDFKDFQSPVANLKDTKLNQPFFGANYYSGTVMPVPNGGIPCEAEVKLQFNEGGIFNFVEAWNRLIQRFQEVDSVSRVQHLDPLPPYHRPSSSQDQPPHYEEAVNKS.

The tract at residues His147–Ser174 is disordered. Over residues Pro165–Ser174 the composition is skewed to basic and acidic residues.

Belongs to the UPF0664 family.

The protein localises to the cytoplasm. The protein resides in the nucleus. The protein is UPF0664 stress-induced protein C29B12.11c of Schizosaccharomyces pombe (strain 972 / ATCC 24843) (Fission yeast).